Here is a 116-residue protein sequence, read N- to C-terminus: Ribonuclease P protein component 2 (116 aa).

Belongs to the eukaryotic/archaeal RNase P protein component 2 family. In terms of assembly, consists of a catalytic RNA component and at least 4-5 protein subunits.

It is found in the cytoplasm. The enzyme catalyses Endonucleolytic cleavage of RNA, removing 5'-extranucleotides from tRNA precursor.. Its function is as follows. Part of ribonuclease P, a protein complex that generates mature tRNA molecules by cleaving their 5'-ends. The sequence is that of Ribonuclease P protein component 2 from Methanosarcina mazei (strain ATCC BAA-159 / DSM 3647 / Goe1 / Go1 / JCM 11833 / OCM 88) (Methanosarcina frisia).